The primary structure comprises 354 residues: ATP-dependent (S)-NAD(P)H-hydrate dehydratase (354 aa).

Positions 42–350 (AENILRAITP…ECLGRSLEDI (309 aa)) constitute a YjeF C-terminal domain. (6S)-NADPHX contacts are provided by residues Gly155 and 208–214 (NVNEYKR). Residues 248 to 252 (KGKSD) and 267 to 276 (GSPRRCGGQG) each bind ATP. Asp277 serves as a coordination point for (6S)-NADPHX.

The protein belongs to the NnrD/CARKD family. The cofactor is Mg(2+).

It carries out the reaction (6S)-NADHX + ATP = ADP + phosphate + NADH + H(+). The catalysed reaction is (6S)-NADPHX + ATP = ADP + phosphate + NADPH + H(+). Its function is as follows. Catalyzes the dehydration of the S-form of NAD(P)HX at the expense of ATP, which is converted to ADP. Together with NAD(P)HX epimerase, which catalyzes the epimerization of the S- and R-forms, the enzyme allows the repair of both epimers of NAD(P)HX, a damaged form of NAD(P)H that is a result of enzymatic or heat-dependent hydration. In Vitis vinifera (Grape), this protein is ATP-dependent (S)-NAD(P)H-hydrate dehydratase.